We begin with the raw amino-acid sequence, 151 residues long: Probable cellulase Cel12b (151 aa).

Active-site residues include E50 and E133.

Belongs to the glycosyl hydrolase 12 (cellulase H) family.

Functionally, probable cellulase. Can hydrolyze barley beta-glucan in vitro. Could be important for the survival of M.tuberculosis in the environment, perhaps in amoebal hosts. The chain is Probable cellulase Cel12b from Mycobacterium tuberculosis (strain ATCC 25618 / H37Rv).